We begin with the raw amino-acid sequence, 120 residues long: Small ribosomal subunit protein uS13 (120 aa).

The tract at residues 96–120 (PCRGQRTRTNARTRKGPRKAIAGKK) is disordered.

The protein belongs to the universal ribosomal protein uS13 family. As to quaternary structure, part of the 30S ribosomal subunit. Forms a loose heterodimer with protein S19. Forms two bridges to the 50S subunit in the 70S ribosome.

In terms of biological role, located at the top of the head of the 30S subunit, it contacts several helices of the 16S rRNA. In the 70S ribosome it contacts the 23S rRNA (bridge B1a) and protein L5 of the 50S subunit (bridge B1b), connecting the 2 subunits; these bridges are implicated in subunit movement. Contacts the tRNAs in the A and P-sites. This is Small ribosomal subunit protein uS13 from Dechloromonas aromatica (strain RCB).